Consider the following 498-residue polypeptide: Calcium-dependent protein kinase 22 (498 aa).

The N-myristoyl glycine moiety is linked to residue G2. A Protein kinase domain is found at 36–305 (YSFGDELGKG…AADVLEHPWM (270 aa)). ATP contacts are provided by residues 42–50 (LGKGNFGTT) and K65. The Proton acceptor role is filled by D164. Position 204 is a phosphoserine (S204). The segment at 309 to 339 (APDKPIDNVVLSRMKQFRAMNKLKKLALKVI) is autoinhibitory domain. 4 EF-hand domains span residues 346-381 (EEIK…HGSK), 382-417 (LSET…RHRL), 418-453 (ERDE…HGMG), and 454-488 (DEAN…GILQ). Positions 359, 361, 363, 365, 370, 395, 397, 399, 401, 406, 431, 433, 435, 437, 442, 466, 468, 470, 472, and 477 each coordinate Ca(2+).

The protein belongs to the protein kinase superfamily. Ser/Thr protein kinase family. CDPK subfamily.

It is found in the membrane. The enzyme catalyses L-seryl-[protein] + ATP = O-phospho-L-seryl-[protein] + ADP + H(+). It carries out the reaction L-threonyl-[protein] + ATP = O-phospho-L-threonyl-[protein] + ADP + H(+). With respect to regulation, activated by calcium. Autophosphorylation may play an important role in the regulation of the kinase activity. May play a role in signal transduction pathways that involve calcium as a second messenger. In Arabidopsis thaliana (Mouse-ear cress), this protein is Calcium-dependent protein kinase 22 (CPK22).